A 156-amino-acid chain; its full sequence is Small ribosomal subunit protein uS7 (156 aa).

This sequence belongs to the universal ribosomal protein uS7 family. Part of the 30S ribosomal subunit. Contacts proteins S9 and S11.

One of the primary rRNA binding proteins, it binds directly to 16S rRNA where it nucleates assembly of the head domain of the 30S subunit. Is located at the subunit interface close to the decoding center, probably blocks exit of the E-site tRNA. This is Small ribosomal subunit protein uS7 from Phytoplasma australiense.